The following is a 267-amino-acid chain: U6 snRNA phosphodiesterase 1 (267 aa).

The interval 1–72 is disordered; it reads MNAAPLVGYS…EDDSARHGGR (72 aa). His-122 (proton acceptor) is an active-site residue. An AMP-binding site is contributed by 122–124; the sequence is HLS. UMP-binding positions include Gln-166, Tyr-204, and 208–212; that span reads SFHVS. AMP is bound by residues Tyr-204 and 206–212; that span reads DPSFHVS. The Proton donor role is filled by His-210.

Belongs to the 2H phosphoesterase superfamily. USB1 family. Interacts with PLRG1, CDC5L and PRPF19.

Its subcellular location is the nucleus. The enzyme catalyses a 3'-end uridylyl-uridine-RNA = a 3'-end 2',3'-cyclophospho-uridine-RNA + uridine. The catalysed reaction is a 3'-end uridylyl-adenosine-RNA = a 3'-end 2',3'-cyclophospho-uridine-RNA + adenosine. Functionally, 3'-5' RNA exonuclease that trims the 3' end of oligo(U) and oligo(A) tracts of the pre-U6 small nuclear RNA (snRNA) molecule, leading to the formation of a mature U6 snRNA 3' end-terminated with a 2',3'-cyclic phosphate. Participates in the U6 snRNA 3' end processing that prevents U6 snRNA degradation. In addition also removes uridines from the 3' end of U6atac snRNA and possibly the vault RNA VTRNA1-1. This Rattus norvegicus (Rat) protein is U6 snRNA phosphodiesterase 1.